The sequence spans 232 residues: MIPTSFPPREEIARLTARMLLEIEAVHFRPQEPFTLASGLPSPTYIDCRKLISYPRIRSTLMDFMAVTLLRDAGFEAFDNIAGGETAGIPFAALVAERLGLPMTYVRKKPKGYGRNARIEGVMTEGQRVLLVEDLTTDGGSKLSFVDAIRETGASCAHTAVIFYYGIFPETIGRLQAHGVTLHPLCTWWDVLAEARASGAFDAATLAEVESFLSNPRDWQDARKPADPTKSL.

5-phospho-alpha-D-ribose 1-diphosphate is bound by residues R107, K108, K111, and 133–141 (EDLTTDGGS). T137 is a binding site for orotate.

The protein belongs to the purine/pyrimidine phosphoribosyltransferase family. PyrE subfamily. In terms of assembly, homodimer. The cofactor is Mg(2+).

It carries out the reaction orotidine 5'-phosphate + diphosphate = orotate + 5-phospho-alpha-D-ribose 1-diphosphate. Its pathway is pyrimidine metabolism; UMP biosynthesis via de novo pathway; UMP from orotate: step 1/2. Functionally, catalyzes the transfer of a ribosyl phosphate group from 5-phosphoribose 1-diphosphate to orotate, leading to the formation of orotidine monophosphate (OMP). This chain is Orotate phosphoribosyltransferase, found in Cereibacter sphaeroides (strain KD131 / KCTC 12085) (Rhodobacter sphaeroides).